Here is a 780-residue protein sequence, read N- to C-terminus: cGMP-dependent protein kinase egl-4 (780 aa).

Disordered regions lie at residues Met1 to Val55 and Glu119 to Gly143. The span at Ser9–Arg35 shows a compositional bias: gly residues. Residues Asp46 to Val55 show a composition bias toward polar residues. A coiled-coil region spans residues Glu61–Ser127. Residues Gly265 to Ala268, Arg275 to Thr276, Arg380, Gly389 to Ala392, Arg399 to Thr400, and Tyr434 contribute to the 3',5'-cyclic GMP site. Positions Val469–Phe729 constitute a Protein kinase domain. Residues Leu475 to Val483 and Lys499 contribute to the ATP site. The Nuclear localization signal motif lies at Lys492–Lys504. The active-site Proton acceptor is Asp593. Residues Met730–Phe780 enclose the AGC-kinase C-terminal domain. The interval Thr757 to Phe780 is disordered.

It belongs to the protein kinase superfamily. AGC Ser/Thr protein kinase family. cGMP subfamily. When phosphorylated, interacts with saeg-2. May interact with saeg-1. The cofactor is Mg(2+). Autophosphorylated. Expressed in AWC sensory neurons (at protein level). Mainly expressed in head neurons, hypodermis, intestine and body wall muscles. L2 and L3 larvae show extensive expression, lower levels are observed in L4 larvae, later embryos and adults. Isoform c is expressed in a subset of neurons in the head, nerve ring, and ventral nerve cord including some motor neurons, also in several neurons in the tail, the pharyngeal marginal cells, body muscle, intestine, vulval muscles, and spermatheca.

The protein resides in the cytoplasm. It is found in the nucleus. It carries out the reaction L-seryl-[protein] + ATP = O-phospho-L-seryl-[protein] + ADP + H(+). The enzyme catalyses L-threonyl-[protein] + ATP = O-phospho-L-threonyl-[protein] + ADP + H(+). Its activity is regulated as follows. Binding of cGMP results in enzyme activation. In terms of biological role, promotes chemoreceptor gene expression in response to increased cGMP levels by antagonizing the gene repression functions of the class II HDAC hda-4 and the mef-2 transcription factor. Regulates gene expression via recruitment of a histone deacetylase complex containing hda-2, saeg-1 and saeg-2. Represses body size and lifespan through the dbl-1 and insulin pathways, respectively. May also signal through daf-3 and/or daf-5. Role in egg-laying, dauer formation and motility. Regulates behavioral responses to various chemosensory stimuli in sensory neurons. Required for the initiation of long term adaptation to prolonged odor exposure which results in a decrease in odor seeking behavior. May regulate this process by phosphorylating tax-2, a subunit of cyclic nucleotide-gated channel tax-2/tax-4. In ASH sensory neurons, negatively regulates avoidance behavior to some bitter tastants, such as quinine, probably by phosphorylating rgs-2 and rgs-3 which are 2 regulator of G-protein signaling proteins. In AWB sensory neurons, involved in avoidance behavior to some repellent odors. In ASE left (ASEL) sensory neuron, involved in the sensing of environmental alkalinity downstream of receptor-type guanylate cyclase gcy-14. In sensory neurons, involved in the signaling pathway downstream of insulin, TGF-beta and receptor-type guanylate cyclase responsible for inducing quiescence after food intake. Might play a role in aversive olfactory learning in AWC neurons when an odor is associated with food deprivation, depending on the ins-1/age-1 signal from the AIA to the AWC neurons. Probably by regulating neuronal transmission downstream of lin-3 and receptor lin-23 and phospholipase plc-3 in ALA neurons, involved in the decrease in locomotion during the quiescent state that precedes each larval molt. The chain is cGMP-dependent protein kinase egl-4 from Caenorhabditis elegans.